Reading from the N-terminus, the 165-residue chain is Phosphopantetheine adenylyltransferase (165 aa).

Thr-9 is a substrate binding site. Residues 9 to 10 (TF) and His-17 each bind ATP. 3 residues coordinate substrate: Lys-41, Leu-73, and Arg-87. Residues 88–90 (GLR), Glu-98, and 123–129 (YQFISGT) contribute to the ATP site.

Belongs to the bacterial CoaD family. Homohexamer. Requires Mg(2+) as cofactor.

The protein localises to the cytoplasm. The enzyme catalyses (R)-4'-phosphopantetheine + ATP + H(+) = 3'-dephospho-CoA + diphosphate. It participates in cofactor biosynthesis; coenzyme A biosynthesis; CoA from (R)-pantothenate: step 4/5. In terms of biological role, reversibly transfers an adenylyl group from ATP to 4'-phosphopantetheine, yielding dephospho-CoA (dPCoA) and pyrophosphate. This chain is Phosphopantetheine adenylyltransferase, found in Burkholderia orbicola (strain MC0-3).